The primary structure comprises 325 residues: Aldo-keto reductase family 1 member A1 (325 aa).

Ala-2 bears the N-acetylalanine mark. At Ser-4 the chain carries Phosphoserine. NADP(+) is bound by residues 11 to 20 (GQKMPLIGLG), Thr-21, and Trp-22. Ser-38 bears the Phosphoserine mark. Asp-45 contributes to the NADP(+) binding site. Tyr-50 functions as the Proton donor in the catalytic mechanism. Lys-127 is modified (N6-acetyllysine; alternate). An N6-succinyllysine; alternate modification is found at Lys-127. N6-succinyllysine is present on Lys-145. 13 residues coordinate NADP(+): Ser-162, Asn-163, Ser-211, Leu-213, Ser-215, Ser-216, Lys-263, Ser-264, Ile-265, Thr-266, Arg-269, Gln-272, and Asn-273. Ser-211 carries the phosphoserine modification.

The protein belongs to the aldo/keto reductase family. In terms of assembly, monomer. Widely expressed. Highly expressed in kidney, salivary gland and liver. Detected in trachea, stomach, brain, lung, prostate, placenta, mammary gland, small intestine and lung.

The protein localises to the cytoplasm. It is found in the cytosol. Its subcellular location is the apical cell membrane. It carries out the reaction a primary alcohol + NADP(+) = an aldehyde + NADPH + H(+). The enzyme catalyses allyl alcohol + NADP(+) = acrolein + NADPH + H(+). It catalyses the reaction glycerol + NADP(+) = D-glyceraldehyde + NADPH + H(+). The catalysed reaction is glycerol + NADP(+) = L-glyceraldehyde + NADPH + H(+). It carries out the reaction hydroxyacetone + NADP(+) = methylglyoxal + NADPH + H(+). The enzyme catalyses a 4-hydroxynonen-1-ol + NADP(+) = a 4-hydroxynonenal + NADPH + H(+). It catalyses the reaction 3-deoxyfructose + NADP(+) = 3-deoxyglucosone + NADPH + H(+). The catalysed reaction is L-gulonate + NADP(+) = aldehydo-D-glucuronate + NADPH + H(+). It carries out the reaction L-gulono-1,4-lactone + NADP(+) = D-glucurono-3,6-lactone + NADPH + H(+). The enzyme catalyses pyridine 3-methanol + NADP(+) = pyridine-3-carbaldehyde + NADPH + H(+). It catalyses the reaction S-nitroso-CoA + NADPH + H(+) = sulfinamide-CoA + NADP(+). The catalysed reaction is S-nitrosoglutathione + NADPH + H(+) = S-(hydroxysulfenamide)glutathione + NADP(+). Functionally, catalyzes the NADPH-dependent reduction of a wide variety of carbonyl-containing compounds to their corresponding alcohols. Displays enzymatic activity towards endogenous metabolites such as aromatic and aliphatic aldehydes, ketones, monosaccharides and bile acids, with a preference for negatively charged substrates, such as glucuronate and succinic semialdehyde. Functions as a detoxifiying enzyme by reducing a range of toxic aldehydes. Reduces methylglyoxal and 3-deoxyglucosone, which are present at elevated levels under hyperglycemic conditions and are cytotoxic. Involved also in the detoxification of lipid-derived aldehydes like acrolein. Plays a role in the activation of procarcinogens, such as polycyclic aromatic hydrocarbon trans-dihydrodiols, and in the metabolism of various xenobiotics and drugs, including the anthracyclines doxorubicin (DOX) and daunorubicin (DAUN). Also acts as an inhibitor of protein S-nitrosylation by mediating degradation of S-nitroso-coenzyme A (S-nitroso-CoA), a cofactor required to S-nitrosylate proteins. S-nitroso-CoA reductase activity is involved in reprogramming intermediary metabolism in renal proximal tubules, notably by inhibiting protein S-nitrosylation of isoform 2 of PKM (PKM2). Also acts as a S-nitroso-glutathione reductase by catalyzing the NADPH-dependent reduction of S-nitrosoglutathione. Displays no reductase activity towards retinoids. In Homo sapiens (Human), this protein is Aldo-keto reductase family 1 member A1 (AKR1A1).